The primary structure comprises 276 residues: NH(3)-dependent NAD(+) synthetase (276 aa).

An ATP-binding site is contributed by 47-54; sequence GISGGQDS. Position 53 (Asp-53) interacts with Mg(2+). Arg-141 contributes to the deamido-NAD(+) binding site. Thr-161 is an ATP binding site. Glu-166 provides a ligand contact to Mg(2+). Deamido-NAD(+) is bound by residues Lys-174 and Asp-181. Lys-190 and Thr-212 together coordinate ATP. 261-262 contributes to the deamido-NAD(+) binding site; sequence HK.

It belongs to the NAD synthetase family. As to quaternary structure, homodimer.

The catalysed reaction is deamido-NAD(+) + NH4(+) + ATP = AMP + diphosphate + NAD(+) + H(+). The protein operates within cofactor biosynthesis; NAD(+) biosynthesis; NAD(+) from deamido-NAD(+) (ammonia route): step 1/1. Functionally, catalyzes the ATP-dependent amidation of deamido-NAD to form NAD. Uses ammonia as a nitrogen source. The sequence is that of NH(3)-dependent NAD(+) synthetase from Levilactobacillus brevis (strain ATCC 367 / BCRC 12310 / CIP 105137 / JCM 1170 / LMG 11437 / NCIMB 947 / NCTC 947) (Lactobacillus brevis).